The sequence spans 484 residues: MTKAIMLQGTGSDVGKTVLVAGLCRLFANRGVRVRPFKPQNMSNNAAVAEDGGEIGRAQWLQSLAARVPSSVHMNPVLLKPQSETGSQIIVQGKVWGHAKGRDYQALKPQLLGAVLESFATMRAGTDLVIVEGAGSPAEINLRQGDIANMGFATRANVPVVLVGDIDRGGVIASLVGTYHILPEEDRRMIRGYIINKFRGDVSLFGTGIEAIGGFTGWPCHGIVPWLKAAGRLPPEDSVVLERLARGSDGALKIAVPVLPRIANFDDFDPLRAEPDVDLVFVRAGERLPADAGLVILPGSKSTIGDLMDLRAQGWDRDITAHVRRGGRVIGICGGYQMLGRMVHDPLGIEGSVTETPGLGLLDVETEMAPEKTVRNSTALSTEYDAPLSGYEIHLGVTRGKDCDRPSTVIDGRPDGARSGDGLIMGTYLHGLFCSDAYRAKLLASFGLSGERMDYRASVETALDEIATELEAVLDPAWLDSLAG.

One can recognise a GATase cobBQ-type domain in the interval 251–438 (ALKIAVPVLP…LHGLFCSDAY (188 aa)). The active-site Nucleophile is the cysteine 333. Residue histidine 430 is part of the active site.

It belongs to the CobB/CobQ family. CobQ subfamily.

The protein operates within cofactor biosynthesis; adenosylcobalamin biosynthesis. In terms of biological role, catalyzes amidations at positions B, D, E, and G on adenosylcobyrinic A,C-diamide. NH(2) groups are provided by glutamine, and one molecule of ATP is hydrogenolyzed for each amidation. This Rhizobium rhizogenes (strain K84 / ATCC BAA-868) (Agrobacterium radiobacter) protein is Cobyric acid synthase.